A 555-amino-acid chain; its full sequence is Membrane protein insertase YidC (555 aa).

Transmembrane regions (helical) follow at residues 7-24, 367-387, 437-457, 476-496, and 511-531; these read VLWVIFFMSAVMLYDNWQ, WGWSIVLLTLLIKAVFFPLSA, LPVVIQIPVFISLYWVLLASV, PFFILPVLMAVSMYVQTSLNP, and PIAFSVMFFFFPAGLVLYYVV.

Belongs to the OXA1/ALB3/YidC family. Type 1 subfamily. Interacts with the Sec translocase complex via SecD. Specifically interacts with transmembrane segments of nascent integral membrane proteins during membrane integration.

It is found in the cell inner membrane. Its function is as follows. Required for the insertion and/or proper folding and/or complex formation of integral membrane proteins into the membrane. Involved in integration of membrane proteins that insert both dependently and independently of the Sec translocase complex, as well as at least some lipoproteins. Aids folding of multispanning membrane proteins. This is Membrane protein insertase YidC from Burkholderia lata (strain ATCC 17760 / DSM 23089 / LMG 22485 / NCIMB 9086 / R18194 / 383).